A 583-amino-acid polypeptide reads, in one-letter code: Atlastin-2 (583 aa).

The segment at Met1–Glu44 is disordered. The tract at residues Met1 to Pro60 is N-terminal hypervariable region (HVR). Topologically, residues Met1 to Ala476 are cytoplasmic. Ser24 is subject to Phosphoserine. Positions Asp91–Asn336 constitute a GB1/RHD3-type G domain. GDP is bound by residues Arg104, Lys105, Gly106, Lys107, Ser108, Phe109, Gln175, Arg244, and Asp245. GTP is bound by residues Arg104, Lys105, Gly106, Lys107, Ser108, and Phe109. Ser108 provides a ligand contact to Mg(2+). Arg244 and Asp245 together coordinate GTP. A coiled-coil region spans residues Leu256–Ile284. Lys270 carries the N6-methyllysine modification. GDP is bound by residues Val303 and Asn306. A GTP-binding site is contributed by Val303. The interval Met374–Gly465 is 3HB (three-helix bundle) domain. The interval Lys466 to Thr474 is linker. Residues Thr477 to Leu497 traverse the membrane as a helical segment. The Lumenal portion of the chain corresponds to Asn498–Ser499. The helical transmembrane segment at Ile500 to Tyr520 threads the bilayer. Topologically, residues Val521–Asp583 are cytoplasmic. The tract at residues Lys547–Asp583 is autoinhibitory domain.

It belongs to the TRAFAC class dynamin-like GTPase superfamily. GB1/RHD3 GTPase family. GB1 subfamily. Monomeric and homodimeric. The homodimer, transiently formed by two molecules on opposing membranes, is the active form mediating ER membrane fusion. Interacts with REEP5 and RTN3; these proteins are involved in endoplasmic reticulum tubular network organization. Interacts with ZFYVE27; both proteins are involved in endoplasmic reticulum tubular network organization. Expressed in peripheral tissues (at protein level).

The protein resides in the endoplasmic reticulum membrane. It catalyses the reaction GTP + H2O = GDP + phosphate + H(+). Its activity is regulated as follows. With its alternative C-terminus disrupting the autoinhibitory domain, this brain-specific isoform is probably more active at fusing ER membranes. In terms of biological role, atlastin-2 (ATL2) is a membrane-anchored GTPase that mediates the GTP-dependent fusion of endoplasmic reticulum (ER) membranes, maintaining the continuous ER network. It facilitates the formation of three-way junctions where ER tubules intersect. Two atlastin-2 on neighboring ER tubules bind GTP and form loose homodimers through the GB1/RHD3-type G domains and 3HB regions. Upon GTP hydrolysis, the 3HB regions tighten, pulling the membranes together to drive their fusion. After fusion, the homodimer disassembles upon release of inorganic phosphate (Pi). Subsequently, GDP dissociates, resetting the monomers to a conformation ready for a new fusion cycle. The protein is Atlastin-2 of Homo sapiens (Human).